We begin with the raw amino-acid sequence, 92 residues long: Putative septation protein SpoVG (92 aa).

It belongs to the SpoVG family.

Could be involved in septation. The protein is Putative septation protein SpoVG of Thermoanaerobacter pseudethanolicus (strain ATCC 33223 / 39E) (Clostridium thermohydrosulfuricum).